The following is a 259-amino-acid chain: FAD-linked sulfhydryl oxidase (259 aa).

Belongs to the baculoviridae p33 family. As to quaternary structure, homodimer.

Its subcellular location is the host cytoplasm. It localises to the host nucleus. It catalyses the reaction 2 R'C(R)SH + O2 = R'C(R)S-S(R)CR' + H2O2. Functionally, functional FAD-linked sulfhydryl oxidase that is required for infectious budded virion (BV) production and for the formation of enveloped occluded virion (ODV). This Lepidoptera (butterflies and moths) protein is FAD-linked sulfhydryl oxidase (P33).